The sequence spans 193 residues: Adenine phosphoribosyltransferase (193 aa).

The protein belongs to the purine/pyrimidine phosphoribosyltransferase family. Homodimer.

It is found in the cytoplasm. It catalyses the reaction AMP + diphosphate = 5-phospho-alpha-D-ribose 1-diphosphate + adenine. It functions in the pathway purine metabolism; AMP biosynthesis via salvage pathway; AMP from adenine: step 1/1. Its function is as follows. Catalyzes a salvage reaction resulting in the formation of AMP, that is energically less costly than de novo synthesis. This Bifidobacterium adolescentis (strain ATCC 15703 / DSM 20083 / NCTC 11814 / E194a) protein is Adenine phosphoribosyltransferase.